Consider the following 474-residue polypeptide: Nuclear hormone receptor family member nhr-91 (474 aa).

The segment at 50–69 (SMTPSFSQTESPNSETDDST) is disordered. Positions 51–69 (MTPSFSQTESPNSETDDST) are enriched in polar residues. The nuclear receptor DNA-binding region spans 97 to 172 (SKLCSVCGDK…KGMLTEAVRE (76 aa)). NR C4-type zinc fingers lie at residues 100 to 120 (CSVC…CEGC) and 136 to 155 (CSQD…CQSC). The region spanning 215-474 (SGKKLIKELV…KNPRRLVFDE (260 aa)) is the NR LBD domain.

This sequence belongs to the nuclear hormone receptor family.

Its subcellular location is the nucleus. Its function is as follows. Orphan nuclear receptor. The protein is Nuclear hormone receptor family member nhr-91 (nhr-91) of Caenorhabditis elegans.